A 206-amino-acid polypeptide reads, in one-letter code: Nucleoside triphosphate pyrophosphatase (206 aa).

Catalysis depends on aspartate 76, which acts as the Proton acceptor.

This sequence belongs to the Maf family. It depends on a divalent metal cation as a cofactor.

The protein resides in the cytoplasm. It carries out the reaction a ribonucleoside 5'-triphosphate + H2O = a ribonucleoside 5'-phosphate + diphosphate + H(+). The enzyme catalyses a 2'-deoxyribonucleoside 5'-triphosphate + H2O = a 2'-deoxyribonucleoside 5'-phosphate + diphosphate + H(+). In terms of biological role, nucleoside triphosphate pyrophosphatase. May have a dual role in cell division arrest and in preventing the incorporation of modified nucleotides into cellular nucleic acids. The protein is Nucleoside triphosphate pyrophosphatase of Streptomyces avermitilis (strain ATCC 31267 / DSM 46492 / JCM 5070 / NBRC 14893 / NCIMB 12804 / NRRL 8165 / MA-4680).